We begin with the raw amino-acid sequence, 432 residues long: Enolase (432 aa).

(2R)-2-phosphoglycerate is bound at residue Gln-163. The active-site Proton donor is the Glu-205. Residues Asp-242, Glu-285, and Asp-312 each coordinate Mg(2+). Residues Lys-337, Arg-366, Ser-367, and Lys-388 each coordinate (2R)-2-phosphoglycerate. The Proton acceptor role is filled by Lys-337.

It belongs to the enolase family. The cofactor is Mg(2+).

Its subcellular location is the cytoplasm. It localises to the secreted. The protein resides in the cell surface. The enzyme catalyses (2R)-2-phosphoglycerate = phosphoenolpyruvate + H2O. Its pathway is carbohydrate degradation; glycolysis; pyruvate from D-glyceraldehyde 3-phosphate: step 4/5. In terms of biological role, catalyzes the reversible conversion of 2-phosphoglycerate (2-PG) into phosphoenolpyruvate (PEP). It is essential for the degradation of carbohydrates via glycolysis. This Bifidobacterium longum subsp. infantis (strain ATCC 15697 / DSM 20088 / JCM 1222 / NCTC 11817 / S12) protein is Enolase.